The primary structure comprises 210 residues: Ribosomal RNA large subunit methyltransferase E (210 aa).

5 residues coordinate S-adenosyl-L-methionine: G60, W62, D85, D101, and D126. K166 acts as the Proton acceptor in catalysis.

It belongs to the class I-like SAM-binding methyltransferase superfamily. RNA methyltransferase RlmE family.

The protein resides in the cytoplasm. The enzyme catalyses uridine(2552) in 23S rRNA + S-adenosyl-L-methionine = 2'-O-methyluridine(2552) in 23S rRNA + S-adenosyl-L-homocysteine + H(+). In terms of biological role, specifically methylates the uridine in position 2552 of 23S rRNA at the 2'-O position of the ribose in the fully assembled 50S ribosomal subunit. This Bordetella pertussis (strain Tohama I / ATCC BAA-589 / NCTC 13251) protein is Ribosomal RNA large subunit methyltransferase E.